The following is a 72-amino-acid chain: Threonine dehydratase operon activator protein (72 aa).

Probable trans-acting positive activator for the tdc operon. The protein is Threonine dehydratase operon activator protein (tdcR) of Escherichia coli (strain K12).